The chain runs to 714 residues: MAMNFGDHASGFRHNDVIRFINNEVLMDGSGPAFYVAFRSRPWNEVEDSLQAIVADSQVPRAIKRACTWSALALSVRVATRQREELLHHVRRLQRHAEERQATSWALTSQLQQLRLEHEVAATQLHLAQAALQQALNERDGLYGRLLQIERFPQAAPLAHEIMSGPQAEQNGAAACPLATEQQSDMVAMGTHANAQMPTPTDVLYVPGPLSPWAQGMQPPLPVPHPFPHPPPFPMKFPSLPPLPPAVVTGAEAAAVPLQMPPTEIHPPCPWPAVGFQEEMAPLWYQRSYIQEEDSKILQGSFPLGDSRSHSQGEGSERSQRMPLPGDSGCHNPLSESPQGTAPLGSSGCHSQEEGTEGPQGMDPLGNRERQNQKEGPKRARRMHTLVFRRSHKSEGPEGPQGTVPQGDSRSYSQEGCSDRAQEMATLVFIRRCKPEGPKRPQWTVPLGDSRSHIKEEGPEGPQRIVLQGDNRSYSQEGSPERAQGMATLVFSRSCKPEEGPERPQDTPLGDSRSHIKEEGPEGPQRIVLQGDNRSYSQEGSPERAQGMATLVFSRSCKPEEGPERPQDTPLGDSRSHIKEEGPEGPQRIVLQGDNRSYSQEGSRERAQGMATLVFSRSCKPEEGPERPQGTPLGDSRSHGVRESPKKWQPQRQKAKKPKVNKVSGSQQQEKPASFPVPVNWKCPWCKAINFSWRTACYKCKKACVPFESGGQTQ.

Disordered regions lie at residues 300-419 (GSFP…GCSD) and 431-675 (RRCK…PASF). Composition is skewed to basic and acidic residues over residues 307–320 (SRSH…ERSQ) and 366–378 (GNRE…EGPK). Basic residues predominate over residues 379–392 (RARRMHTLVFRRSH). A compositionally biased stretch (polar residues) spans 403–416 (TVPQGDSRSYSQEG). Basic and acidic residues-rich tracts occupy residues 495–505 (CKPEEGPERPQ), 557–567 (CKPEEGPERPQ), and 636–646 (SRSHGVRESPK). The RanBP2-type zinc-finger motif lies at 677 to 706 (VPVNWKCPWCKAINFSWRTACYKCKKACVP).

Belongs to the TEX13 family.

The protein is Testis-expressed protein 13D of Homo sapiens (Human).